Consider the following 356-residue polypeptide: AT-hook motif nuclear-localized protein 1 (356 aa).

A disordered region spans residues Met-1–His-127. Over residues Val-49–Leu-66 the composition is skewed to pro residues. Residues Met-88–Lys-97 are compositionally biased toward basic residues. Residues Lys-89–Lys-97 carry the Bipartite nuclear localization signal motif. The a.T hook DNA-binding region spans Lys-89 to Asp-101. The span at Ala-106–Pro-118 shows a compositional bias: low complexity. Residues Gly-167–Thr-309 form the PPC domain. The required for nuclear localization stretch occupies residues Gly-270 to Ala-287. The short motif at Lys-295 to Asp-302 is the Nuclear localization signal element.

The protein localises to the nucleus. Its subcellular location is the nucleoplasm. The protein resides in the chromosome. Transcription factor that specifically binds AT-rich DNA sequences related to the nuclear matrix attachment regions (MARs). May play a function in the positioning of chromatin fibers within the nucleus. The polypeptide is AT-hook motif nuclear-localized protein 1 (Arabidopsis thaliana (Mouse-ear cress)).